A 344-amino-acid chain; its full sequence is Outer membrane protein A (344 aa).

The Periplasmic portion of the chain corresponds to 1-14; the sequence is MKAIFVLNAAPKDN. A beta stranded membrane pass occupies residues 15–24; sequence TWYAGGKLGW. Topologically, residues 25–49 are extracellular; it reads SQYHDTGFYGNGFQNNNGPTRNDQL. The chain crosses the membrane as a beta stranded span at residues 50–59; that stretch reads GAGAFGGYQV. Topologically, residues 60–62 are periplasmic; it reads NPY. The beta stranded transmembrane segment at 63-71 threads the bilayer; that stretch reads LGFEMGYDW. The Extracellular segment spans residues 72-89; that stretch reads LGRMAYKGSVDNGAFKAQ. The beta stranded transmembrane segment at 90-100 threads the bilayer; that stretch reads GVQLTAKLGYP. Over 101-104 the chain is Periplasmic; sequence ITDD. Residues 105 to 114 traverse the membrane as a beta stranded segment; that stretch reads LDIYTRLGGM. Residues 115–139 lie on the Extracellular side of the membrane; the sequence is VWRADSKGNYASTGVSRSEHDTGVS. The chain crosses the membrane as a beta stranded span at residues 140-149; the sequence is PVFAGGVEWA. Topologically, residues 150–153 are periplasmic; that stretch reads VTRD. The chain crosses the membrane as a beta stranded span at residues 154-162; it reads IATRLEYQW. The Extracellular portion of the chain corresponds to 163–179; it reads VNNIGDAGTVGTRPDNG. A beta stranded membrane pass occupies residues 180–188; the sequence is MLSLGVSYR. Topologically, residues 189–344 are periplasmic; it reads FGQEDAAPVV…YKEVVTQPQA (156 aa). 4 repeat units span residues 199 to 200, 201 to 202, 203 to 204, and 205 to 206. The tract at residues 199–206 is 4 X 2 AA tandem repeats of A-P; sequence APAPAPAP. The OmpA-like domain maps to 208–336; the sequence is VATKHFTLKS…RVEIEVKGYK (129 aa). Cys-309 and Cys-321 are joined by a disulfide.

It belongs to the outer membrane OOP (TC 1.B.6) superfamily. OmpA family. Monomer and homodimer.

It is found in the cell outer membrane. Its function is as follows. With TolR probably plays a role in maintaining the position of the peptidoglycan cell wall in the periplasm. Acts as a porin with low permeability that allows slow penetration of small solutes; an internal gate slows down solute passage. In terms of biological role, required for conjugation with F-type plasmids; probably serves as the mating receptor on recipient cells. This chain is Outer membrane protein A, found in Klebsiella pneumoniae.